Reading from the N-terminus, the 463-residue chain is Sporulation-specific protein 22 (463 aa).

Positions 1–25 are cleaved as a signal peptide; sequence MNRITRKSCLFAIIFASLFVTHALG. LRR repeat units lie at residues 127-147, 185-206, 207-233, 251-275, and 302-325; these read SPELIRIQAGNLNKIEGLFQL, IEIIKDIVISDTSLANIENFNK, VQEIDTFNINNNRFLETIHSNVKTIRG, LREVENITIRDTSLVYLPQLTKVKS, and INNVNLIKVNLENLTDIQGGLMIA. Residues Asn256, Asn314, and Asn327 are each glycosylated (N-linked (GlcNAc...) asparagine). Asn440 carries GPI-anchor amidated asparagine lipidation. The propeptide at 441–463 is removed in mature form; that stretch reads SANPSMQLDPLLFGTCLVAMLLF.

This sequence belongs to the SPS2 family.

The protein localises to the cell membrane. Redundant with SPS2 for the organization of the beta-glucan layer of the spore wall. The polypeptide is Sporulation-specific protein 22 (SPS22) (Saccharomyces cerevisiae (strain ATCC 204508 / S288c) (Baker's yeast)).